The primary structure comprises 98 residues: Cytochrome b (98 aa).

3 helical membrane passes run 1–18, 42–63, and 78–98; these read LLGL…FLAM, WLIR…YLHV, and WNIG…GYVL. Positions 48 and 62 each coordinate heme b.

This sequence belongs to the cytochrome b family. As to quaternary structure, the cytochrome bc1 complex contains 3 respiratory subunits (MT-CYB, CYC1 and UQCRFS1), 2 core proteins (UQCRC1 and UQCRC2) and probably 6 low-molecular weight proteins. Heme b serves as cofactor.

Its subcellular location is the mitochondrion inner membrane. In terms of biological role, component of the ubiquinol-cytochrome c reductase complex (complex III or cytochrome b-c1 complex) that is part of the mitochondrial respiratory chain. The b-c1 complex mediates electron transfer from ubiquinol to cytochrome c. Contributes to the generation of a proton gradient across the mitochondrial membrane that is then used for ATP synthesis. The protein is Cytochrome b (mt-cyb) of Scaphirhynchus platorynchus (Shovelnose sturgeon).